The chain runs to 316 residues: Ribose-phosphate pyrophosphokinase (316 aa).

Residues aspartate 42–glutamate 44 and arginine 101–glutamine 102 contribute to the ATP site. Residues histidine 135 and aspartate 174 each coordinate Mg(2+). The active site involves lysine 197. D-ribose 5-phosphate is bound by residues arginine 199, aspartate 223, and aspartate 227–threonine 231.

The protein belongs to the ribose-phosphate pyrophosphokinase family. Class I subfamily. Homohexamer. Mg(2+) serves as cofactor.

The protein localises to the cytoplasm. The catalysed reaction is D-ribose 5-phosphate + ATP = 5-phospho-alpha-D-ribose 1-diphosphate + AMP + H(+). Its pathway is metabolic intermediate biosynthesis; 5-phospho-alpha-D-ribose 1-diphosphate biosynthesis; 5-phospho-alpha-D-ribose 1-diphosphate from D-ribose 5-phosphate (route I): step 1/1. Its function is as follows. Involved in the biosynthesis of the central metabolite phospho-alpha-D-ribosyl-1-pyrophosphate (PRPP) via the transfer of pyrophosphoryl group from ATP to 1-hydroxyl of ribose-5-phosphate (Rib-5-P). The protein is Ribose-phosphate pyrophosphokinase of Halalkalibacterium halodurans (strain ATCC BAA-125 / DSM 18197 / FERM 7344 / JCM 9153 / C-125) (Bacillus halodurans).